The following is a 289-amino-acid chain: MNTDRITAFIKNGISARMPFYDTLPDMDLVFGKNHLPSLEYGANYFLQLSKINDINRLSTEMLSLYTHDLNKESDISKLFEPYNIKTIKSYGRSIQADAVVVDLRPSNSLYKNEHPYYKSNNYLKENNLYICDYTMITFEIYRPIFELSTEKTCIIKVPTLFGKTIVNAVRVYCSLFRYVKLYKLSADSWLKDSAIIVCQQPHAANINKFITYIRKVTKSQTWLDSNNVNFILIHDSVERVFIEKFLSFSYKIYESLYYVHSLLYSSMTSDLQSLDNEYQKKLIKLLRG.

Heterodimer of a large and a small subunit.

The protein resides in the virion. The catalysed reaction is a 5'-end (5'-triphosphoguanosine)-ribonucleoside in mRNA + S-adenosyl-L-methionine = a 5'-end (N(7)-methyl 5'-triphosphoguanosine)-ribonucleoside in mRNA + S-adenosyl-L-homocysteine. Catalyzes the last reaction in the mRNA cap formation pathway. The chain is mRNA-capping enzyme small subunit from Fowlpox virus (strain NVSL) (FPV).